Reading from the N-terminus, the 180-residue chain is Peptide deformylase (180 aa).

Fe cation is bound by residues Cys-96 and His-138. Glu-139 is an active-site residue. His-142 provides a ligand contact to Fe cation.

This sequence belongs to the polypeptide deformylase family. The cofactor is Fe(2+).

The catalysed reaction is N-terminal N-formyl-L-methionyl-[peptide] + H2O = N-terminal L-methionyl-[peptide] + formate. Removes the formyl group from the N-terminal Met of newly synthesized proteins. Requires at least a dipeptide for an efficient rate of reaction. N-terminal L-methionine is a prerequisite for activity but the enzyme has broad specificity at other positions. The protein is Peptide deformylase of Rhodopseudomonas palustris (strain BisA53).